The following is a 153-amino-acid chain: Endoribonuclease YbeY (153 aa).

3 residues coordinate Zn(2+): H114, H118, and H124.

This sequence belongs to the endoribonuclease YbeY family. The cofactor is Zn(2+).

It is found in the cytoplasm. In terms of biological role, single strand-specific metallo-endoribonuclease involved in late-stage 70S ribosome quality control and in maturation of the 3' terminus of the 16S rRNA. This chain is Endoribonuclease YbeY, found in Shewanella baltica (strain OS195).